The primary structure comprises 450 residues: Vimentin beta (450 aa).

The interval 1–81 (MSSRTSTSSY…FGLADAINTE (81 aa)) is head. Residues 24–38 (STYSSRQYSSPGRTT) are compositionally biased toward polar residues. The tract at residues 24 to 56 (STYSSRQYSSPGRTTSRVSYSSASSTSPSLYMS) is disordered. Low complexity predominate over residues 39-56 (SRVSYSSASSTSPSLYMS). Residues 82–117 (FKANRTNEKAEMQHVNDRFASYIEEVRFLEQQNKIL) form a coil 1A region. Positions 89 to 397 (EKAEMQHVND…NLLEGEEYRI (309 aa)) constitute an IF rod domain. The linker 1 stretch occupies residues 118 to 139 (TAELEQMRGKGSSRVGDLYEDE). The segment at 140-231 (MRELRRQVDQ…KLHDEELAEL (92 aa)) is coil 1B. The tract at residues 232-254 (QMQIQERHVQIDMEVAKPDLTAA) is linker 12. Positions 255–393 (LRDVRQQYET…ATYRNLLEGE (139 aa)) are coil 2. A tail region spans residues 394 to 450 (EYRITTPFPNLSSLSLRESMKEIRPAMDSLSKKVVIKTIETRDGHIINQSTQKDNLE).

It belongs to the intermediate filament family. In terms of assembly, homomer. One of the most prominent phosphoproteins in various cells of mesenchymal origin. Phosphorylation is enhanced during cell division, at which time vimentin filaments are significantly reorganized. In terms of tissue distribution, expressed in low amounts in retina, optic nerve, brain, and spinal cord and in very high amounts in eye lens.

Functionally, vimentins are class-III intermediate filaments found in various non-epithelial cells, especially mesenchymal cells. Vimentin is attached to the nucleus, endoplasmic reticulum, and mitochondria, either laterally or terminally. The chain is Vimentin beta from Carassius auratus (Goldfish).